Here is a 297-residue protein sequence, read N- to C-terminus: HTH-type transcriptional regulator ArgP (297 aa).

Positions 4–60 constitute an HTH lysR-type domain; sequence PDYRTLQALDAVIRERGFERAAQKLCITQSAVSQRIKQLENMFGQPLLVRTVPPRPT. A DNA-binding region (H-T-H motif) is located at residues 21-40; sequence FERAAQKLCITQSAVSQRIK.

It belongs to the LysR transcriptional regulatory family. Homodimer.

Its function is as follows. Controls the transcription of genes involved in arginine and lysine metabolism. The protein is HTH-type transcriptional regulator ArgP of Escherichia coli O127:H6 (strain E2348/69 / EPEC).